The primary structure comprises 201 residues: Putative manganese efflux pump MntP (201 aa).

The next 6 helical transmembrane spans lie at 3-23 (LVSIILISIGLSMDAFAVSIT), 39-59 (IGLFFGGFQALMPLIGWSIGI), 65-85 (IAALDHWIALILLSIIGGKMI), 116-136 (LTLLAIATSIDALAIGVSFAF), 141-161 (IINTIIIIGSITFVICFIGVM), and 176-196 (ILGGIVLIFIGIKIFIEHTNI).

It belongs to the MntP (TC 9.B.29) family.

It is found in the cell membrane. In terms of biological role, probably functions as a manganese efflux pump. In Clostridium botulinum (strain Loch Maree / Type A3), this protein is Putative manganese efflux pump MntP.